A 268-amino-acid polypeptide reads, in one-letter code: Tryptophan synthase alpha chain (268 aa).

Active-site proton acceptor residues include E49 and D60.

The protein belongs to the TrpA family. Tetramer of two alpha and two beta chains.

It carries out the reaction (1S,2R)-1-C-(indol-3-yl)glycerol 3-phosphate + L-serine = D-glyceraldehyde 3-phosphate + L-tryptophan + H2O. It functions in the pathway amino-acid biosynthesis; L-tryptophan biosynthesis; L-tryptophan from chorismate: step 5/5. Its function is as follows. The alpha subunit is responsible for the aldol cleavage of indoleglycerol phosphate to indole and glyceraldehyde 3-phosphate. This Escherichia coli O157:H7 protein is Tryptophan synthase alpha chain.